The chain runs to 60 residues: MAQIKITLSKSPIGRKPEQRKTVAALGLGKLNSSVVKEDNAAIRGMVNAVSHLVTVEDVK.

It belongs to the universal ribosomal protein uL30 family. As to quaternary structure, part of the 50S ribosomal subunit.

This chain is Large ribosomal subunit protein uL30, found in Streptococcus thermophilus (strain CNRZ 1066).